The sequence spans 140 residues: TPT1-like protein (140 aa).

Residues 6 to 140 (MITYWDLISH…LANFKNYQKT (135 aa)) enclose the TCTP domain.

Belongs to the TCTP family.

This Homo sapiens (Human) protein is TPT1-like protein.